The primary structure comprises 391 residues: Multidrug resistance protein MdtL (391 aa).

12 helical membrane-spanning segments follow: residues 4-24 (FLIC…MYLV), 42-62 (IAFS…GKVA), 69-89 (PVAI…SLAE), 93-113 (LFLA…VVAF), 131-151 (LLNG…HLIM), 158-178 (SLFW…LFIL), 203-222 (FFLS…LTFV), 245-265 (ALTA…LGIF), 269-289 (TLMI…AVSP), 293-313 (VSLF…GVAM), 331-351 (LGIA…VVGI), and 356-376 (MLIG…MFVA).

Belongs to the major facilitator superfamily. DHA1 family. MdtL (TC 2.A.1.2.22) subfamily.

The protein localises to the cell inner membrane. Functionally, confers resistance to chloramphenicol. This chain is Multidrug resistance protein MdtL, found in Escherichia coli O17:K52:H18 (strain UMN026 / ExPEC).